Reading from the N-terminus, the 103-residue chain is Pyrimidine/purine nucleoside phosphorylase (103 aa).

The protein belongs to the nucleoside phosphorylase PpnP family.

It catalyses the reaction a purine D-ribonucleoside + phosphate = a purine nucleobase + alpha-D-ribose 1-phosphate. It carries out the reaction adenosine + phosphate = alpha-D-ribose 1-phosphate + adenine. The enzyme catalyses cytidine + phosphate = cytosine + alpha-D-ribose 1-phosphate. The catalysed reaction is guanosine + phosphate = alpha-D-ribose 1-phosphate + guanine. It catalyses the reaction inosine + phosphate = alpha-D-ribose 1-phosphate + hypoxanthine. It carries out the reaction thymidine + phosphate = 2-deoxy-alpha-D-ribose 1-phosphate + thymine. The enzyme catalyses uridine + phosphate = alpha-D-ribose 1-phosphate + uracil. The catalysed reaction is xanthosine + phosphate = alpha-D-ribose 1-phosphate + xanthine. In terms of biological role, catalyzes the phosphorolysis of diverse nucleosides, yielding D-ribose 1-phosphate and the respective free bases. Can use uridine, adenosine, guanosine, cytidine, thymidine, inosine and xanthosine as substrates. Also catalyzes the reverse reactions. This is Pyrimidine/purine nucleoside phosphorylase from Shewanella sp. (strain W3-18-1).